The following is a 524-amino-acid chain: Fusicoccadiene C-8 hydroxylase (524 aa).

Residues 16–36 (LQLLCIGPLVYACVSFIIKIV) form a helical membrane-spanning segment. Asparagine 126 and asparagine 344 each carry an N-linked (GlcNAc...) asparagine glycan. Heme is bound at residue cysteine 465. A glycan (N-linked (GlcNAc...) asparagine) is linked at asparagine 496.

This sequence belongs to the cytochrome P450 family. The cofactor is heme.

Its subcellular location is the membrane. It functions in the pathway mycotoxin biosynthesis. Cytochrome P450 monooxygenase; part of the 2 gene clusters that mediate the biosynthesis of fusicoccins, diterpene glucosides that display phytohormone-like activity and function as potent activators of plasma membrane H(+)-ATPases in plants by modifying 14-3-3 proteins and cause the plant disease constriction canker. The first step in the pathway is performed by the fusicoccadiene synthase PaFS that possesses both prenyl transferase and terpene cyclase activity, converting isopentenyl diphosphate and dimethylallyl diphosphate into geranylgeranyl diphosphate (GGDP) and successively converting GGDP into fusicocca-2,10(14)-diene, a precursor for fusicoccin H. The second step is the oxidation at the C-8 position by the cytochrome P450 monooxygenase PaP450-2 to yield fusicocca-2,10(14)-diene-8-beta-ol. The cytochrome P450 monooxygenase PaP450-1 then catalyzes the hydroxylation at the C-16 position to produce fusicocca-2,10(14)-diene-8-beta,16-diol. The dioxygenase fc-dox then catalyzes the 16-oxydation of fusicocca-2,10(14)-diene-8-beta,16-diol to yield an aldehyde (8-beta-hydroxyfusicocca-1,10(14)-dien-16-al). The short-chain dehydrogenase/reductase fc-sdr catalyzes the reduction of the aldehyde to yield fusicocca-1,10(14)-diene-8-beta,16-diol. The next step is the hydroxylation at C-9 performed by the cytochrome P450 monooxygenase PaP450-3 that leads to fusicoccin H aglycon which is glycosylated to fusicoccin H by the O-glycosyltransferase PaGT. Hydroxylation at C-12 by the cytochrome P450 monooxygenase PaP450-4 leads then to the production of fusicoccin Q and is followed by methylation by the O-methyltransferase PaMT to yield fusicoccin P. Fusicoccin P is further converted to fusicoccin J via prenylation by the O-glucose prenyltransferase PaPT. Cytochrome P450 monooxygenase PaP450-5 then performs hydroxylation at C-19 to yield dideacetyl-fusicoccin A which is acetylated to 3'-O-deacetyl-fusicoccin A by the O-acetyltransferase PaAT-2. Finally, a another acetylation by the O-acetyltransferase PaAT-1 yields fusicoccin A. The polypeptide is Fusicoccadiene C-8 hydroxylase (Phomopsis amygdali (Fusicoccum amygdali)).